The chain runs to 186 residues: TATA-box-binding protein B (186 aa).

Tandem repeats lie at residues 10–86 and 101–179.

It belongs to the TBP family.

General factor that plays a role in the activation of archaeal genes transcribed by RNA polymerase. Binds specifically to the TATA box promoter element which lies close to the position of transcription initiation. The chain is TATA-box-binding protein B (tbpB1) from Halobacterium salinarum (strain ATCC 700922 / JCM 11081 / NRC-1) (Halobacterium halobium).